We begin with the raw amino-acid sequence, 304 residues long: MKAQKPGLHPRNRHHQRYDLPALCQAHPDLQGYITLNPLGEQTIDFANPQAVKALNKALLAHFYAVKHWDIPDGFLCPPVPGRADYIHHLADLLAQDSGEVPKQATILDIGTGANLIFPLIGVHEYGWRFTGSEISPEAFASAQAIVNGNPGLTRQIRLRRQKESQAIFHGVIHKNETYDATLCNPPFHDSAESARAGGERKRRNLGLGADSALNFGGQQQELWCEGGEVAFISQMIRESQAFARQVKWFTSLVSRGDNLPPLYRLLTKVGAVKVVKKEMAQGQKQSRFIAWSFMDDAKRRRPF.

The protein belongs to the methyltransferase superfamily. METTL16/RlmF family.

Its subcellular location is the cytoplasm. The catalysed reaction is adenosine(1618) in 23S rRNA + S-adenosyl-L-methionine = N(6)-methyladenosine(1618) in 23S rRNA + S-adenosyl-L-homocysteine + H(+). Specifically methylates the adenine in position 1618 of 23S rRNA. This is Ribosomal RNA large subunit methyltransferase F from Klebsiella pneumoniae (strain 342).